Here is a 232-residue protein sequence, read N- to C-terminus: Zinc-finger homeodomain protein 5 (232 aa).

Over residues 1–11 (MELSEHEEDAG) the composition is skewed to acidic residues. The disordered stretch occupies residues 1 to 25 (MELSEHEEDAGDVGGGCSSPPTPPH). Residues 40–86 (YHECLRNHAAASGGHVVDGCGEFMPASTEEPLACAACGCHRSFHRRD) form a ZF-HD dimerization-type; degenerate zinc finger. The disordered stretch occupies residues 126 to 170 (GLPFPGYGTPSGGTGTTTASSSDERLRPSPVQPRRRSRTTFTREQ). Positions 159–222 (RRRSRTTFTR…NNKHSFKQKQ (64 aa)) form a DNA-binding region, homeobox.

Homo- and heterodimer with other ZFHD proteins.

The protein resides in the nucleus. In terms of biological role, putative transcription factor. The chain is Zinc-finger homeodomain protein 5 (ZHD5) from Oryza sativa subsp. japonica (Rice).